A 27-amino-acid chain; its full sequence is Delta-conotoxin SuVIA (27 aa).

3 cysteine pairs are disulfide-bonded: C1–C17, C8–C21, and C16–C25.

The protein belongs to the conotoxin O1 superfamily. In terms of tissue distribution, expressed by the venom duct, in the proximal part (indicative of a defensive role).

Its subcellular location is the secreted. Its function is as follows. This toxin activates voltage-gated sodium channels (Nav1.3/SCN3A (EC(50)=3.98 nM), Nav1.4/SCN4A (EC(50)=4.99 nM), Nav1.6/SCN8A (EC(50)=1.27 nM) and Nav1.7/SCN9A (EC(50)=2.42 nM)). It shifts the voltage-dependence of activation to more hyperpolarized potentials but has only little effect on channel inactivation. In vivo, it induces nocifensive or pain-like behaviors in mice when injected intraplantarly. This is coherent with the specific defensive role deduced from its proximal position in the venom gland. This is Delta-conotoxin SuVIA from Conus suturatus (Sutured cone).